The chain runs to 188 residues: NAD(P)H-quinone oxidoreductase subunit 6, chloroplastic (188 aa).

5 helical membrane passes run 10-30 (GILL…ILLN), 32-52 (IVQS…LYLV), 61-81 (AQVL…VMLI), 97-117 (GNNI…SIIL), and 153-173 (FLLP…GAIT).

It belongs to the complex I subunit 6 family. As to quaternary structure, NDH is composed of at least 16 different subunits, 5 of which are encoded in the nucleus.

It localises to the plastid. The protein resides in the chloroplast thylakoid membrane. The catalysed reaction is a plastoquinone + NADH + (n+1) H(+)(in) = a plastoquinol + NAD(+) + n H(+)(out). It catalyses the reaction a plastoquinone + NADPH + (n+1) H(+)(in) = a plastoquinol + NADP(+) + n H(+)(out). NDH shuttles electrons from NAD(P)H:plastoquinone, via FMN and iron-sulfur (Fe-S) centers, to quinones in the photosynthetic chain and possibly in a chloroplast respiratory chain. The immediate electron acceptor for the enzyme in this species is believed to be plastoquinone. Couples the redox reaction to proton translocation, and thus conserves the redox energy in a proton gradient. In Psilotum nudum (Whisk fern), this protein is NAD(P)H-quinone oxidoreductase subunit 6, chloroplastic (ndhG).